The chain runs to 194 residues: uncharacterized protein (194 aa).

Belongs to the calycin superfamily. Fatty-acid binding protein (FABP) family.

This is an uncharacterized protein from Caenorhabditis elegans.